The following is a 2213-amino-acid chain: Protein sidekick-1 (2213 aa).

The tract at residues 1 to 73 (MARGARPSAA…GAGRCGGRRA (73 aa)) is disordered. Residues 23-38 (AGPGRPRGSPPGRARP) are compositionally biased toward low complexity. 5 Ig-like C2-type domains span residues 104 to 186 (PYFK…SEVQ), 191 to 277 (GSFM…SPFI), 293 to 378 (PTIV…RATA), 386 to 476 (PYFT…LDVT), and 480 to 569 (PVFT…ATLT). Cys126 and Cys169 are disulfide-bonded. 2 N-linked (GlcNAc...) asparagine glycosylation sites follow: Asn271 and Asn301. Disulfide bonds link Cys315–Cys362, Cys408–Cys458, and Cys501–Cys553. N-linked (GlcNAc...) asparagine glycosylation is found at Asn550, Asn563, and Asn572. The 90-residue stretch at 574–663 (TSIVHPPEDH…GNDSRMARLE (90 aa)) folds into the Ig-like C2-type 6 domain. A disulfide bridge connects residues Cys595 and Cys647. N-linked (GlcNAc...) asparagine glycans are attached at residues Asn655, Asn679, Asn782, Asn821, Asn882, Asn1015, and Asn1024. Fibronectin type-III domains are found at residues 670-766 (SPQN…LPEE), 771-867 (PPKN…TLQG), 872-970 (PPQN…TQED), 974-1068 (AVGH…VPPD), 1072-1171 (APSN…TLQA), 1176-1274 (APTS…TRES), 1279-1376 (APEN…TKDD), 1380-1474 (PPVR…TEKR), 1479-1576 (PPRE…TLQD), 1581-1699 (PPGS…VGEA), 1704-1800 (APQN…THQA), 1804-1899 (APSF…AGPA), and 1902-2000 (SPGS…SAQV). Residues Asn1282 and Asn1333 are each glycosylated (N-linked (GlcNAc...) asparagine). N-linked (GlcNAc...) asparagine glycans are attached at residues Asn1654, Asn1748, Asn1767, Asn1819, and Asn1893. A helical transmembrane segment spans residues 2010 to 2030 (FLLVMALSSLIVILLVVFALV). Residues 2031–2213 (LHGQNKKYKN…TPLTGFSSFV (183 aa)) are Cytoplasmic-facing. The disordered stretch occupies residues 2075–2098 (STFSKKNGTRSPPRPSPGGLHYSD). The PDZ-binding motif lies at 2207–2213 (TGFSSFV).

It belongs to the sidekick family. As to quaternary structure, homodimer; mediates homophilic interactions to promote cell adhesion. In terms of tissue distribution, up-regulated in glomeruli in HIV-associated nephropathy. In diseased glomeruli, significantly overexpressed and the expression is no longer restricted to mesangial cells but includes podocytes and parietal epithelial cells.

It is found in the cell membrane. The protein resides in the synapse. In terms of biological role, adhesion molecule that promotes lamina-specific synaptic connections in the retina. Expressed in specific subsets of interneurons and retinal ganglion cells (RGCs) and promotes synaptic connectivity via homophilic interactions. The protein is Protein sidekick-1 of Homo sapiens (Human).